The primary structure comprises 913 residues: Chitin synthase 1 (913 aa).

The tract at residues 1–27 (MSGAPPPSSGFAPRSYGQQPLSHAPRS) is disordered. Thr-237, Glu-241, and Asp-291 together coordinate UDP-N-acetyl-alpha-D-glucosamine. A glycan (N-linked (GlcNAc...) asparagine) is linked at Asn-420. The active site involves Asp-496. A glycan (N-linked (GlcNAc...) asparagine) is linked at Asn-510. 6 helical membrane-spanning segments follow: residues 539-559 (WLNG…RIYS), 581-601 (YTAF…FIVF), 625-645 (AVYI…IIGL), 658-678 (FVGA…AGIF), 684-704 (TVHS…ASAL), and 711-731 (IFMT…IFTI). Positions 741 to 743 (SWG) match the Conserved SWG motif motif. The next 2 membrane-spanning stretches (helical) occupy residues 800-820 (VLLT…YFAS) and 825-845 (MPVL…GSIG). 2 N-linked (GlcNAc...) asparagine glycosylation sites follow: Asn-867 and Asn-900.

Belongs to the chitin synthase family. Class II subfamily. As to quaternary structure, homodimer. Mn(2+) serves as cofactor.

It is found in the cell membrane. The catalysed reaction is [(1-&gt;4)-N-acetyl-beta-D-glucosaminyl](n) + UDP-N-acetyl-alpha-D-glucosamine = [(1-&gt;4)-N-acetyl-beta-D-glucosaminyl](n+1) + UDP + H(+). Its activity is regulated as follows. The activity is inhibited by nikkomycin Z (NikZ). Polymerizes chitin, a structural polymer of the cell wall and septum, by transferring the sugar moiety of UDP-GlcNAc to the non-reducing end of the growing chitin polymer. Involved in mycelial growth, sporangial production, zoospore release and pathogenesis. The polypeptide is Chitin synthase 1 (Phytophthora sojae (strain P6497) (Soybean stem and root rot agent)).